The chain runs to 743 residues: Ribosome biogenesis protein BOP1 homolog (743 aa).

WD repeat units follow at residues Gly365–Arg404, Lys575–Lys615, Ser617–Lys655, Ser659–Lys701, and Lys712–Glu743.

This sequence belongs to the WD repeat BOP1/ERB1 family.

It is found in the nucleus. Its subcellular location is the nucleolus. The protein resides in the nucleoplasm. Functionally, required for maturation of ribosomal RNAs and formation of the large ribosomal subunit. This is Ribosome biogenesis protein BOP1 homolog from Leishmania braziliensis.